The following is a 203-amino-acid chain: MSIKYVATSKLPTPWGVFAMHGFEDTETSKEHVALTFGTLSSDAPVLGRIHSECLTGDALFSLRCDCGFQLQTAMQNIAETGSGFILYLRQEGRGIGLLNKIRAYELQDKGANTVEANEQLGFPADMRKYDMIQPMLEQIGVKHVRLMTNNPRKVKAMKEIGIEVVERVPLQVGKNRYNEAYLKTKSTELGHMMSEYHFTDEE.

49–53 (RIHSE) provides a ligand contact to GTP. Cysteine 54, cysteine 65, and cysteine 67 together coordinate Zn(2+). Residues glutamine 70, 92-94 (EGR), and threonine 114 contribute to the GTP site. Catalysis depends on aspartate 126, which acts as the Proton acceptor. Arginine 128 serves as the catalytic Nucleophile. Residues threonine 149 and lysine 154 each contribute to the GTP site.

The protein belongs to the GTP cyclohydrolase II family. Zn(2+) is required as a cofactor.

It carries out the reaction GTP + 4 H2O = 2,5-diamino-6-hydroxy-4-(5-phosphoribosylamino)-pyrimidine + formate + 2 phosphate + 3 H(+). Its pathway is cofactor biosynthesis; riboflavin biosynthesis; 5-amino-6-(D-ribitylamino)uracil from GTP: step 1/4. In terms of biological role, catalyzes the conversion of GTP to 2,5-diamino-6-ribosylamino-4(3H)-pyrimidinone 5'-phosphate (DARP), formate and pyrophosphate. This Shewanella sp. (strain ANA-3) protein is GTP cyclohydrolase-2.